Here is a 510-residue protein sequence, read N- to C-terminus: Cytochrome c-552 (510 aa).

Positions 1 to 50 (MVVFLFILYRQSDLKFKSMNGVIIVNTLKKRLFVATTMIWGLSVTLPVLA) are cleaved as a signal peptide. Histidine 124 provides a ligand contact to heme c. Heme contacts are provided by cysteine 152, cysteine 155, and lysine 156. Heme c-binding residues include cysteine 190, cysteine 193, histidine 194, cysteine 239, cysteine 242, and histidine 243. Glutamate 245, tyrosine 246, lysine 291, and glutamine 293 together coordinate Ca(2+). Residue tyrosine 246 coordinates substrate. Histidine 294 provides a ligand contact to substrate. Heme c is bound by residues histidine 305, cysteine 312, cysteine 315, histidine 316, histidine 331, cysteine 344, cysteine 347, histidine 348, and histidine 423.

This sequence belongs to the cytochrome c-552 family. Requires Ca(2+) as cofactor. Heme c is required as a cofactor.

The protein resides in the periplasm. The catalysed reaction is 6 Fe(III)-[cytochrome c] + NH4(+) + 2 H2O = 6 Fe(II)-[cytochrome c] + nitrite + 8 H(+). It functions in the pathway nitrogen metabolism; nitrate reduction (assimilation). In terms of biological role, catalyzes the reduction of nitrite to ammonia, consuming six electrons in the process. In Pasteurella multocida (strain Pm70), this protein is Cytochrome c-552.